A 372-amino-acid polypeptide reads, in one-letter code: 4-hydroxy-3-methylbut-2-en-1-yl diphosphate synthase (flavodoxin) (372 aa).

4 residues coordinate [4Fe-4S] cluster: Cys-270, Cys-273, Cys-305, and Glu-312.

The protein belongs to the IspG family. Requires [4Fe-4S] cluster as cofactor.

It catalyses the reaction (2E)-4-hydroxy-3-methylbut-2-enyl diphosphate + oxidized [flavodoxin] + H2O + 2 H(+) = 2-C-methyl-D-erythritol 2,4-cyclic diphosphate + reduced [flavodoxin]. The protein operates within isoprenoid biosynthesis; isopentenyl diphosphate biosynthesis via DXP pathway; isopentenyl diphosphate from 1-deoxy-D-xylulose 5-phosphate: step 5/6. Converts 2C-methyl-D-erythritol 2,4-cyclodiphosphate (ME-2,4cPP) into 1-hydroxy-2-methyl-2-(E)-butenyl 4-diphosphate. This is 4-hydroxy-3-methylbut-2-en-1-yl diphosphate synthase (flavodoxin) from Pseudoalteromonas translucida (strain TAC 125).